Reading from the N-terminus, the 917-residue chain is Translation initiation factor IF-2 (917 aa).

The interval 241–312 (EEAKKGTLHK…GGWRSGGGRK (72 aa)) is disordered. Residues 252-262 (AKAEGAEDKKK) show a composition bias toward basic and acidic residues. Residues 274–283 (SSETSSTWQE) show a composition bias toward polar residues. Over residues 298–308 (TSGGVGGWRSG) the composition is skewed to gly residues. A tr-type G domain is found at 415 to 582 (PRPPVVTVMG…NVLLQAEILE (168 aa)). The G1 stretch occupies residues 424–431 (GHVDHGKT). 424–431 (GHVDHGKT) is a binding site for GTP. The segment at 449 to 453 (GITQH) is G2. Residues 470–473 (DTPG) form a G3 region. Residues 470–474 (DTPGH) and 524–527 (NKID) contribute to the GTP site. Residues 524 to 527 (NKID) form a G4 region. The interval 560-562 (SAK) is G5.

The protein belongs to the TRAFAC class translation factor GTPase superfamily. Classic translation factor GTPase family. IF-2 subfamily.

Its subcellular location is the cytoplasm. In terms of biological role, one of the essential components for the initiation of protein synthesis. Protects formylmethionyl-tRNA from spontaneous hydrolysis and promotes its binding to the 30S ribosomal subunits. Also involved in the hydrolysis of GTP during the formation of the 70S ribosomal complex. The chain is Translation initiation factor IF-2 from Polynucleobacter necessarius subsp. necessarius (strain STIR1).